Here is a 126-residue protein sequence, read N- to C-terminus: Aspartate 1-decarboxylase (126 aa).

The active-site Schiff-base intermediate with substrate; via pyruvic acid is S25. At S25 the chain carries Pyruvic acid (Ser). T57 lines the substrate pocket. The active-site Proton donor is Y58. Residue 73 to 75 (GAA) participates in substrate binding.

It belongs to the PanD family. In terms of assembly, heterooctamer of four alpha and four beta subunits. Requires pyruvate as cofactor. Is synthesized initially as an inactive proenzyme, which is activated by self-cleavage at a specific serine bond to produce a beta-subunit with a hydroxyl group at its C-terminus and an alpha-subunit with a pyruvoyl group at its N-terminus.

It localises to the cytoplasm. The catalysed reaction is L-aspartate + H(+) = beta-alanine + CO2. It functions in the pathway cofactor biosynthesis; (R)-pantothenate biosynthesis; beta-alanine from L-aspartate: step 1/1. Functionally, catalyzes the pyruvoyl-dependent decarboxylation of aspartate to produce beta-alanine. This chain is Aspartate 1-decarboxylase, found in Proteus mirabilis (strain HI4320).